Reading from the N-terminus, the 737-residue chain is Catalase-peroxidase (737 aa).

The disordered stretch occupies residues Met-1–Asn-29. A cross-link (tryptophyl-tyrosyl-methioninium (Trp-Tyr) (with M-253)) is located at residues Trp-101–Tyr-227. His-102 functions as the Proton acceptor in the catalytic mechanism. The tryptophyl-tyrosyl-methioninium (Tyr-Met) (with W-101) cross-link spans Tyr-227–Met-253. A heme b-binding site is contributed by His-268.

The protein belongs to the peroxidase family. Peroxidase/catalase subfamily. Homodimer or homotetramer. Heme b is required as a cofactor. In terms of processing, formation of the three residue Trp-Tyr-Met cross-link is important for the catalase, but not the peroxidase activity of the enzyme.

The enzyme catalyses H2O2 + AH2 = A + 2 H2O. It catalyses the reaction 2 H2O2 = O2 + 2 H2O. Bifunctional enzyme with both catalase and broad-spectrum peroxidase activity. This Saccharopolyspora erythraea (strain ATCC 11635 / DSM 40517 / JCM 4748 / NBRC 13426 / NCIMB 8594 / NRRL 2338) protein is Catalase-peroxidase.